The sequence spans 395 residues: Cyclomarin C epoxidase CymV (395 aa).

It belongs to the cytochrome P450 family.

Cytochrome P450; part of the gene cluster that mediates the biosynthesis of cyclic heptapeptides, known as cyclomarins and also of cyclic dipeptides, called cyclomarazines, which have both antimicrobial and cytotoxic effects. First, CymD catalyzes the reverse N-prenylation of monomeric L-tryptophan with dimethylallyl diphosphate (DMAPP) to form N-(1,1-dimethylallyl)-tryptophan (r-N-DMAT). The N-(1,1-dimethylallyl)-tryptophan produced by CymD is then combined with a range of standard and nonproteinogenic amino acid substrates to synthesize the peptides, a process that is probably catalyzed by the non-canonical nonribosomal peptide synthetase (NRPS), CymA. Other proteins in the cluster catalyze further modifications of the peptides including CymV which catalyzes the oxidation of olefinic cyclomarins and cyclomarazines to their respective epoxide derivatives. This chain is Cyclomarin C epoxidase CymV, found in Salinispora arenicola (strain CNS-205).